A 214-amino-acid polypeptide reads, in one-letter code: Glutathione S-transferase F11 (214 aa).

The region spanning 2–82 (VVKVYGQIKA…YYATKYADQG (81 aa)) is the GST N-terminal domain. Glutathione contacts are provided by residues 11-12 (AA), 40-41 (QK), 53-54 (QV), and 66-67 (ES). Residues 89 to 214 (TLEGRAIVDQ…WKKLMELAAY (126 aa)) form the GST C-terminal domain.

This sequence belongs to the GST superfamily. Phi family.

It localises to the cytoplasm. The protein localises to the cytosol. It catalyses the reaction RX + glutathione = an S-substituted glutathione + a halide anion + H(+). May be involved in the conjugation of reduced glutathione to a wide number of exogenous and endogenous hydrophobic electrophiles and have a detoxification role against certain herbicides. The sequence is that of Glutathione S-transferase F11 from Arabidopsis thaliana (Mouse-ear cress).